The chain runs to 453 residues: Aldehyde dehydrogenase, dimeric NADP-preferring (453 aa).

Serine 2 is modified (N-acetylserine). Lysine 178 bears the N6-acetyllysine mark. 188–193 (GSTGVG) is an NAD(+) binding site. An N6-acetyllysine modification is found at lysine 194. Catalysis depends on residues glutamate 210 and cysteine 244.

It belongs to the aldehyde dehydrogenase family. As to quaternary structure, homodimer. In terms of tissue distribution, high levels in stomach, esophagus and lung; low level in the liver and kidney.

It is found in the cytoplasm. The enzyme catalyses an aldehyde + NAD(+) + H2O = a carboxylate + NADH + 2 H(+). It catalyses the reaction octanal + NAD(+) + H2O = octanoate + NADH + 2 H(+). Its function is as follows. ALDHs play a major role in the detoxification of alcohol-derived acetaldehyde. They are involved in the metabolism of corticosteroids, biogenic amines, neurotransmitters, and lipid peroxidation. Oxidizes medium and long chain aldehydes into non-toxic fatty acids. Preferentially oxidizes aromatic aldehyde substrates. Comprises about 50 percent of corneal epithelial soluble proteins. May play a role in preventing corneal damage caused by ultraviolet light. This is Aldehyde dehydrogenase, dimeric NADP-preferring (ALDH3A1) from Homo sapiens (Human).